A 400-amino-acid chain; its full sequence is MAKAKFERNKPHVNIGTIGHVDHGKTSLTAAITKVLGFLGSAEYKAYDQIDAAPEERERGITINTSHVEYQTETRHYAHVDCPGHADYVKNMITGAAQMDGAILVVSAADGPMPQTREHILLSHQVGVPYIIVFLNKCDMVDDDELIELVEMEVRELLSSYEFPGDDTPIIRGSALVALESTSTDINSPEYAPIVALMKEVDNYIPTPERATDKAFIMPVEDVFSITGRGTVATGRVEKGIVKVGDEVEIVGLMEAPKKTVVTGVEMFRKLLDQAEAGDNIGALLRGVQRTDIERGQVLAKPGSIKPHTYFEGQVYVLTSAEGGRHKPFFNGYRPQFYFRTTDVTGVIEIPEGTEMVMPGDHITMKIKLITPIAMEEGLKFAIREGGRTVGAGNVSKIIE.

Residues 10–209 (KPHVNIGTIG…EVDNYIPTPE (200 aa)) form the tr-type G domain. The interval 19 to 26 (GHVDHGKT) is G1. 19–26 (GHVDHGKT) lines the GTP pocket. Thr26 is a binding site for Mg(2+). The tract at residues 60 to 64 (GITIN) is G2. Residues 81-84 (DCPG) form a G3 region. GTP-binding positions include 81–85 (DCPGH) and 136–139 (NKCD). Residues 136–139 (NKCD) are G4. Positions 174–176 (SAL) are G5.

This sequence belongs to the TRAFAC class translation factor GTPase superfamily. Classic translation factor GTPase family. EF-Tu/EF-1A subfamily. Monomer.

Its subcellular location is the cytoplasm. The enzyme catalyses GTP + H2O = GDP + phosphate + H(+). GTP hydrolase that promotes the GTP-dependent binding of aminoacyl-tRNA to the A-site of ribosomes during protein biosynthesis. This is Elongation factor Tu from Ruminiclostridium cellulolyticum (strain ATCC 35319 / DSM 5812 / JCM 6584 / H10) (Clostridium cellulolyticum).